The following is a 525-amino-acid chain: Nucleolar and spindle-associated protein 1-A (525 aa).

4 disordered regions span residues 46-205 (ESKD…LHEA), 248-292 (EKTP…RFSA), 373-397 (TPES…PEKA), and 451-525 (SLSR…VPVQ). Positions 58–69 (SSLTDTDELNSS) are enriched in polar residues. The span at 82 to 92 (THRRGRGRKPL) shows a compositional bias: basic residues. Residues 106 to 127 (SVGTGTESLASETDNTQDQNCL) are compositionally biased toward polar residues. Positions 160-169 (TTEKRQKKAS) are enriched in basic and acidic residues. Over residues 270–285 (PPTTGASPSRTPTNQR) the composition is skewed to polar residues. Residues 476 to 494 (CGSNNNVSVLKNNFKQPHL) show a composition bias toward polar residues. Residues 495 to 514 (QTREDRRKQHEQDRKGKRDQ) are compositionally biased toward basic and acidic residues.

It belongs to the NUSAP family. In terms of assembly, interacts with DNA. Interacts with microtubules, ipo7, kpna2 and kpnb1. Microtubule stabilization is inhibited by ipo7 and kpna2, while microtubule bundling is inhibited by kpnb1. Active GTP-bound ran causes dissociation of ipo7 and kpnb1.

The protein resides in the cytoplasm. The protein localises to the nucleus. It localises to the cytoskeleton. Its subcellular location is the spindle. Microtubule-associated protein with the capacity to bundle and stabilize microtubules. May associate with chromosomes and promote the organization of meiotic or mitotic spindle microtubules around them. The chain is Nucleolar and spindle-associated protein 1-A (nusap1-a) from Xenopus laevis (African clawed frog).